The primary structure comprises 301 residues: Glycine--tRNA ligase alpha subunit (301 aa).

This sequence belongs to the class-II aminoacyl-tRNA synthetase family. As to quaternary structure, tetramer of two alpha and two beta subunits.

The protein localises to the cytoplasm. The enzyme catalyses tRNA(Gly) + glycine + ATP = glycyl-tRNA(Gly) + AMP + diphosphate. This is Glycine--tRNA ligase alpha subunit from Neisseria meningitidis serogroup C (strain 053442).